Here is a 370-residue protein sequence, read N- to C-terminus: 3-isopropylmalate dehydrogenase (370 aa).

77 to 90 (GPKWDSVPYEVRPE) provides a ligand contact to NAD(+). Residues Arg-97, Arg-107, Arg-135, and Asp-226 each contribute to the substrate site. Mg(2+) contacts are provided by Asp-226, Asp-250, and Asp-254. An NAD(+)-binding site is contributed by 290–302 (GSAPDIAGQGLAN).

The protein belongs to the isocitrate and isopropylmalate dehydrogenases family. LeuB type 1 subfamily. Homodimer. Mg(2+) is required as a cofactor. Requires Mn(2+) as cofactor.

It localises to the cytoplasm. It carries out the reaction (2R,3S)-3-isopropylmalate + NAD(+) = 4-methyl-2-oxopentanoate + CO2 + NADH. It functions in the pathway amino-acid biosynthesis; L-leucine biosynthesis; L-leucine from 3-methyl-2-oxobutanoate: step 3/4. Functionally, catalyzes the oxidation of 3-carboxy-2-hydroxy-4-methylpentanoate (3-isopropylmalate) to 3-carboxy-4-methyl-2-oxopentanoate. The product decarboxylates to 4-methyl-2 oxopentanoate. In Nitrobacter winogradskyi (strain ATCC 25391 / DSM 10237 / CIP 104748 / NCIMB 11846 / Nb-255), this protein is 3-isopropylmalate dehydrogenase.